The sequence spans 221 residues: UPF0502 protein PA14_19450 (221 aa).

This sequence belongs to the UPF0502 family.

The sequence is that of UPF0502 protein PA14_19450 from Pseudomonas aeruginosa (strain UCBPP-PA14).